Reading from the N-terminus, the 97-residue chain is Large ribosomal subunit protein bL28 (97 aa).

The protein belongs to the bacterial ribosomal protein bL28 family.

The chain is Large ribosomal subunit protein bL28 from Rickettsia akari (strain Hartford).